We begin with the raw amino-acid sequence, 260 residues long: Indole-3-glycerol phosphate synthase (260 aa).

It belongs to the TrpC family.

It catalyses the reaction 1-(2-carboxyphenylamino)-1-deoxy-D-ribulose 5-phosphate + H(+) = (1S,2R)-1-C-(indol-3-yl)glycerol 3-phosphate + CO2 + H2O. It functions in the pathway amino-acid biosynthesis; L-tryptophan biosynthesis; L-tryptophan from chorismate: step 4/5. The chain is Indole-3-glycerol phosphate synthase from Staphylococcus aureus (strain MSSA476).